The primary structure comprises 1433 residues: Pleckstrin homology domain-containing family H member 1 (1433 aa).

Residues 40–174 (NIRHLLAERM…QILMLQDKLQ (135 aa)) adopt a coiled-coil conformation. Disordered regions lie at residues 247 to 346 (DKAD…LSPP) and 552 to 634 (SSVP…TSSY). Over residues 252–266 (PKSSQDGVDATSTVK) the composition is skewed to polar residues. Positions 279–299 (MRDRAMGGASDRDHSSDELNS) are enriched in basic and acidic residues. Positions 308-318 (SSSSSSSSSSS) are enriched in low complexity. Over residues 332–343 (TPTPKSPPPVSL) the composition is skewed to pro residues. Positions 557-567 (PDDDSGSEDDS) are enriched in acidic residues. Low complexity predominate over residues 568–578 (SSLASLHTSTL). The segment covering 597 to 606 (VSTSSISSES) has biased composition (polar residues). PH domains follow at residues 643-737 (TLEK…NVLK) and 751-859 (KPTA…VAAG). A MyTH4 domain is found at 896 to 1050 (FSKEGLRYPL…PSRMEILSIL (155 aa)). Positions 1061-1392 (FSIPVHFMNN…SYINYWTSSL (332 aa)) constitute an FERM domain.

Functionally, critical component of the guidance pathway underlying endothelial cell migration and blood vessel patterning. Involved in mediating membrane localization of ephrin proteins, which have been shown to provide guidance cues for endothelial cell migration. This chain is Pleckstrin homology domain-containing family H member 1 (plekhh1), found in Danio rerio (Zebrafish).